Here is a 247-residue protein sequence, read N- to C-terminus: Anionic trypsin (247 aa).

Residues 1-15 form the signal peptide; the sequence is MNPLLILAFLGAAVA. Positions 16-23 are cleaved as a propeptide — activation peptide; it reads TPTDDDDK. In terms of domain architecture, Peptidase S1 spans 24-244; it reads IVGGYTCEEN…FVDWIQSTIA (221 aa). Intrachain disulfides connect cysteine 30-cysteine 160, cysteine 48-cysteine 64, cysteine 132-cysteine 233, cysteine 139-cysteine 206, cysteine 171-cysteine 185, and cysteine 196-cysteine 220. Histidine 63 serves as the catalytic Charge relay system. Glutamate 75, asparagine 77, valine 80, and glutamate 85 together coordinate Ca(2+). The active-site Charge relay system is aspartate 107. Serine 200 serves as the catalytic Charge relay system.

The protein belongs to the peptidase S1 family. Ca(2+) serves as cofactor.

The protein localises to the secreted. Its subcellular location is the extracellular space. The catalysed reaction is Preferential cleavage: Arg-|-Xaa, Lys-|-Xaa.. The sequence is that of Anionic trypsin from Canis lupus familiaris (Dog).